We begin with the raw amino-acid sequence, 350 residues long: Pleckstrin (350 aa).

The region spanning 4-101 (KRIREGYLVK…WVRDIKKAIK (98 aa)) is the PH 1 domain. Residue Lys64 is modified to N6-acetyllysine. A phosphoserine mark is found at Ser113 and Ser117. The 86-residue stretch at 136–221 (PEKGIKELNL…NPDAFYYFPD (86 aa)) folds into the DEP domain. Residues 244 to 347 (IIIKQGCLLK…WIKAIQVASR (104 aa)) enclose the PH 2 domain.

In terms of biological role, major protein kinase C substrate of platelets. The polypeptide is Pleckstrin (Plek) (Rattus norvegicus (Rat)).